A 529-amino-acid polypeptide reads, in one-letter code: GMP synthase [glutamine-hydrolyzing] (529 aa).

Positions 16 to 205 (PVLVVDFGAQ…LHDFAGLDAD (190 aa)) constitute a Glutamine amidotransferase type-1 domain. Cysteine 93 serves as the catalytic Nucleophile. Residues histidine 179 and glutamate 181 contribute to the active site. The 198-residue stretch at 206 to 403 (WTAANIAGVL…LDLPEEIVAR (198 aa)) folds into the GMPS ATP-PPase domain. 233–239 (SGGVDSA) contributes to the ATP binding site.

Homodimer.

It carries out the reaction XMP + L-glutamine + ATP + H2O = GMP + L-glutamate + AMP + diphosphate + 2 H(+). Its pathway is purine metabolism; GMP biosynthesis; GMP from XMP (L-Gln route): step 1/1. In terms of biological role, catalyzes the synthesis of GMP from XMP. This Mycobacterium leprae (strain Br4923) protein is GMP synthase [glutamine-hydrolyzing].